Consider the following 187-residue polypeptide: UPF0200 protein MM_1313 (187 aa).

Position 9-16 (G9–S16) interacts with ATP.

This sequence belongs to the UPF0200 family.

The sequence is that of UPF0200 protein MM_1313 from Methanosarcina mazei (strain ATCC BAA-159 / DSM 3647 / Goe1 / Go1 / JCM 11833 / OCM 88) (Methanosarcina frisia).